The sequence spans 504 residues: ATP synthase subunit alpha (504 aa).

170–177 (GDRQTGKT) serves as a coordination point for ATP.

The protein belongs to the ATPase alpha/beta chains family. F-type ATPases have 2 components, CF(1) - the catalytic core - and CF(0) - the membrane proton channel. CF(1) has five subunits: alpha(3), beta(3), gamma(1), delta(1), epsilon(1). CF(0) has four main subunits: a, b, b' and c.

The protein localises to the cellular thylakoid membrane. The enzyme catalyses ATP + H2O + 4 H(+)(in) = ADP + phosphate + 5 H(+)(out). Functionally, produces ATP from ADP in the presence of a proton gradient across the membrane. The alpha chain is a regulatory subunit. The polypeptide is ATP synthase subunit alpha (Prochlorococcus marinus (strain MIT 9211)).